Here is a 35-residue protein sequence, read N- to C-terminus: U5-ctenitoxin-Co1a (35 aa).

Intrachain disulfides connect Cys-4/Cys-18, Cys-11/Cys-24, Cys-17/Cys-32, and Cys-26/Cys-30.

As to expression, expressed by the venom gland.

The protein resides in the secreted. Its function is as follows. Blocks voltage-gated sodium channels (Nav). This Ctenus ornatus (Brazilian spider) protein is U5-ctenitoxin-Co1a.